A 554-amino-acid chain; its full sequence is Glutamine--tRNA ligase (554 aa).

The 'HIGH' region signature appears at 34-44 (PEPNGYLHIGH). ATP is bound by residues 35-37 (EPN) and 41-47 (HIGHAKS). Residues aspartate 67 and tyrosine 212 each coordinate L-glutamine. ATP contacts are provided by residues threonine 231, 261–262 (RL), and 269–271 (MSK). The 'KMSKS' region motif lies at 268–272 (VMSKR). The interval 317 to 324 (TKQDNTIE) is interaction with tRNA.

The protein belongs to the class-I aminoacyl-tRNA synthetase family. In terms of assembly, monomer.

It is found in the cytoplasm. It carries out the reaction tRNA(Gln) + L-glutamine + ATP = L-glutaminyl-tRNA(Gln) + AMP + diphosphate. This Shigella flexneri serotype 5b (strain 8401) protein is Glutamine--tRNA ligase.